The primary structure comprises 785 residues: DNA ligase (785 aa).

NAD(+)-binding positions include 32–36 (DAEYD), 81–82 (SL), and glutamate 121. Lysine 123 acts as the N6-AMP-lysine intermediate in catalysis. Residues arginine 144, glutamate 181, lysine 294, and lysine 318 each coordinate NAD(+). Cysteine 412, cysteine 415, cysteine 442, and cysteine 448 together coordinate Zn(2+). Residues 702 to 785 (VEGLPEAGHT…AFLAKHNIPV (84 aa)) enclose the BRCT domain.

Belongs to the NAD-dependent DNA ligase family. LigA subfamily. The cofactor is Mg(2+). Mn(2+) serves as cofactor.

It carries out the reaction NAD(+) + (deoxyribonucleotide)n-3'-hydroxyl + 5'-phospho-(deoxyribonucleotide)m = (deoxyribonucleotide)n+m + AMP + beta-nicotinamide D-nucleotide.. DNA ligase that catalyzes the formation of phosphodiester linkages between 5'-phosphoryl and 3'-hydroxyl groups in double-stranded DNA using NAD as a coenzyme and as the energy source for the reaction. It is essential for DNA replication and repair of damaged DNA. In Pseudomonas fluorescens (strain SBW25), this protein is DNA ligase.